Consider the following 127-residue polypeptide: Major sperm protein isoform alpha (127 aa).

Ala-2 is subject to N-acetylalanine. The MSP domain occupies 9–126; the sequence is DINTQPSQKI…RRKNLPIEYN (118 aa).

As to quaternary structure, forms filaments 10 nm wide, with a characteristic substructure repeating axially at 9 nm. Sperm.

The protein resides in the cell projection. The protein localises to the pseudopodium. Its subcellular location is the cytoplasm. It is found in the cytoskeleton. Functionally, central component in molecular interactions underlying sperm crawling. Forms an extensive filament system that extends from sperm villipoda, along the leading edge of the pseudopod. The sequence is that of Major sperm protein isoform alpha from Ascaris suum (Pig roundworm).